Here is a 1549-residue protein sequence, read N- to C-terminus: VPS10 homolog 1 (1549 aa).

The N-terminal stretch at 1–21 (MALFRALYIIWVFLLIPLSNA) is a signal peptide. At 22–1369 (EEFTPKVTRT…AFREKYSINT (1348 aa)) the chain is on the lumenal side. BNR repeat units lie at residues 57 to 68 (EISFDAGENWKT), 101 to 112 (YVTDDQGKSWRP), 159 to 170 (IYTTNDGVSFSQ), 228 to 239 (ILSADGGETFKE), 393 to 404 (KVSVDNGLTWTN), and 465 to 476 (FISRDSGLTWRL). N-linked (GlcNAc...) asparagine glycosylation is present at N479. BNR repeat units follow at residues 511–522 (YYSLDQGKTWGE) and 740–751 (YISHDGGQTIKR). N769 carries N-linked (GlcNAc...) asparagine glycosylation. The stretch at 837 to 848 (YLTKDGGETFTE) is one BNR 9 repeat. An N-linked (GlcNAc...) asparagine glycan is attached at N986. 3 BNR repeats span residues 1040–1051 (KITFNDGSDWNF), 1119–1130 (FLTTDGGETWTE), and 1160–1171 (SYSTDFGKTWKD). A helical transmembrane segment spans residues 1370 to 1390 (GAYALVFVTILLVIFFVAWFV). At 1391 to 1549 (YDRGIRRNGG…DLAAARSEDK (159 aa)) the chain is on the cytoplasmic side. A disordered region spans residues 1479-1549 (EPDGFHEDSN…DLAAARSEDK (71 aa)). A compositionally biased stretch (polar residues) spans 1489–1501 (DLSSFRGQGSNSE). Residues 1535-1549 (ASHESDLAAARSEDK) show a composition bias toward basic and acidic residues.

It belongs to the VPS10-related sortilin family.

The protein localises to the golgi apparatus. Its subcellular location is the trans-Golgi network membrane. It is found in the endosome membrane. In terms of biological role, functions as a sorting receptor in the Golgi compartment required for the intracellular sorting and delivery of soluble vacuolar proteins, like carboxypeptidase Y (CPY) and proteinase A. The sequence is that of VPS10 homolog 1 (VTH1) from Saccharomyces cerevisiae (strain ATCC 204508 / S288c) (Baker's yeast).